Consider the following 715-residue polypeptide: Metastasis-associated protein MTA1 (715 aa).

The 164-residue stretch at 1 to 164 (MAANMYRVGD…PQQKTLLADK (164 aa)) folds into the BAH domain. An ELM2 domain is found at 165–276 (GEIRVGNRYQ…KAISALVPQG (112 aa)). A Glycyl lysine isopeptide (Lys-Gly) (interchain with G-Cter in ubiquitin) cross-link involves residue Lys-182. The region spanning 283–335 (DEMEEWSASEANLFEEALEKYGKDFTDIQQDFLPWKSLTSIIEYYYMWKTTDR) is the SANT domain. At Ser-386 the chain carries Phosphoserine. The GATA-type; atypical zinc finger occupies 393-420 (CESCYTTQSYQWYSWGPPNMQCRLCASC). The tract at residues 435-460 (RLDGERPGPNRSNMSPHGLPARSSGS) is disordered. 2 positions are modified to phosphoserine: Ser-446 and Ser-449. A Glycyl lysine isopeptide (Lys-Gly) (interchain with G-Cter in SUMO2 and SUMO3) cross-link involves residue Lys-509. Ser-522 is subject to Phosphoserine. An SH3-binding motif is present at residues 545 to 552 (PRPPKPDP). A Glycyl lysine isopeptide (Lys-Gly) (interchain with G-Cter in SUMO2) cross-link involves residue Lys-549. Thr-564 is modified (phosphothreonine). The residue at position 576 (Ser-576) is a Phosphoserine. At Thr-578 the chain carries Phosphothreonine. Lys-626 is subject to N6-acetyllysine; alternate. Residue Lys-626 forms a Glycyl lysine isopeptide (Lys-Gly) (interchain with G-Cter in ubiquitin); alternate linkage. Residue Ser-639 is modified to Phosphoserine. The interval 656-686 (DVFYMATEETRKIRKLLSSSETKRAARRPYK) is interaction with RBBP4. The tract at residues 673-715 (SSSETKRAARRPYKPIALRQSQALPPRPPPPAPVNDEPIVIED) is disordered. The short motif at 696 to 705 (LPPRPPPPAP) is the SH3-binding element. The SUMO interaction motif 1 (SIM); crucial for efficient sumoylation motif lies at 711–715 (IVIED).

Belongs to the metastasis-associated protein family. Component of the nucleosome remodeling and deacetylase (NuRD) repressor complex, composed of core proteins MTA1, MTA2, MTA3, RBBP4, RBBP7, HDAC1, HDAC2, MBD2, MBD3, and peripherally associated proteins CDK2AP1, CDK2AP2, GATAD2A, GATAD2B, CHD3, CHD4 and CHD5. The exact stoichiometry of the NuRD complex is unknown, and some subunits such as MBD2 and MBD3, GATAD2A and GATAD2B, and CHD3, CHD4 and CHD5 define mutually exclusive NuRD complexes. Interacts with RBBP4; the interaction is direct. Interacts with BMAL1. Interacts with CLOCK. Interacts with COP1. Interacts with CSNK1G2 in the cytoplasm. Interacts with EP300. Interacts with HDAC2. Interacts with IFI16. Interacts with ITGB3BP/CENPR. Interacts with MBD3L2. Interacts with MDM2. Interacts with NACC2. Interacts with p53/TP53. Interacts with PIAS1. Interacts with PIAS3. Interacts with PIAS4. Interacts with PWWP2A. Interacts with PWWP2B. Interacts with SENP1. Interacts with SENP2. Interacts with SIX3; facilitates the binding of SIX3 to the core DNA motif of SIX3 promoter. Interacts with SUMO1. Interacts with SUMO2. Interacts with TFCP2L1; which is indispensable for TFCP2L1-mediated self-renewal-promoting effect and endoderm-inhibiting action. Interacts with TFAP2C. Interacts with TPR. Interacts with UBE2I/UBC9. Post-translationally, phosphorylation by CSNK1G2/CK1 triggered by estrogen enhances corepression of estrogen receptor (ER). In terms of processing, acetylation is essential for its transcriptional coactivator activity. Sumoylation positively regulates its transcriptional corepressor activity but does not affect the protein stability. Sumoylated preferentially by SUMO2 or SUMO3 than SUMO1. Sumoylation is enhanced by PIAS1/3/4 and preferentially sumoylated by SUMO2 in the presence of PIAS1/3/4. Desumoylated by SENP1. Post-translationally, ubiquitinated by COP1, which leads to proteasomal degradation. Widely expressed. High expression in brain, liver, kidney, and cardiac muscle, ovaries, adrenal glands and virgin mammary glands. Higher in tumors than in adjacent normal tissue from the same individual. Up-regulated in a wide variety of cancers including breast, liver, ovarian, and colorectal cancer and its expression levels are closely correlated with tumor aggressiveness and metastasis.

It localises to the nucleus. The protein localises to the cytoplasm. It is found in the nucleus envelope. Its subcellular location is the cytoskeleton. Functionally, transcriptional coregulator which can act as both a transcriptional corepressor and coactivator. Acts as a component of the histone deacetylase NuRD complex which participates in the remodeling of chromatin. In the NuRD complex, regulates transcription of its targets by modifying the acetylation status of the target chromatin and cofactor accessibility to the target DNA. In conjunction with other components of NuRD, acts as a transcriptional corepressor of BRCA1, ESR1, TFF1 and CDKN1A. Acts as a transcriptional coactivator of BCAS3, and SUMO2, independent of the NuRD complex. Stimulates the expression of WNT1 by inhibiting the expression of its transcriptional corepressor SIX3. Regulates p53-dependent and -independent DNA repair processes following genotoxic stress. Regulates the stability and function of p53/TP53 by inhibiting its ubiquitination by COP1 and MDM2 thereby regulating the p53-dependent DNA repair. Plays a role in the regulation of the circadian clock and is essential for the generation and maintenance of circadian rhythms under constant light and for normal entrainment of behavior to light-dark (LD) cycles. Positively regulates the CLOCK-BMAL1 heterodimer mediated transcriptional activation of its own transcription and the transcription of CRY1. Regulates deacetylation of BMAL1 by regulating SIRT1 expression, resulting in derepressing CRY1-mediated transcription repression. With TFCP2L1, promotes establishment and maintenance of pluripotency in embryonic stem cells (ESCs) and inhibits endoderm differentiation. Binds to ESR1 and sequesters it in the cytoplasm and enhances its non-genomic responses. This Homo sapiens (Human) protein is Metastasis-associated protein MTA1 (MTA1).